We begin with the raw amino-acid sequence, 256 residues long: Dihydroorotate dehydrogenase B (NAD(+)), electron transfer subunit (256 aa).

One can recognise an FAD-binding FR-type domain in the interval methionine 1–valine 101. Residues arginine 52–serine 55, isoleucine 69–arginine 71, and glycine 76–threonine 77 contribute to the FAD site. [2Fe-2S] cluster is bound by residues cysteine 220, cysteine 225, cysteine 228, and cysteine 243.

The protein belongs to the PyrK family. Heterotetramer of 2 PyrK and 2 PyrD type B subunits. It depends on [2Fe-2S] cluster as a cofactor. FAD serves as cofactor.

It functions in the pathway pyrimidine metabolism; UMP biosynthesis via de novo pathway; orotate from (S)-dihydroorotate (NAD(+) route): step 1/1. Responsible for channeling the electrons from the oxidation of dihydroorotate from the FMN redox center in the PyrD type B subunit to the ultimate electron acceptor NAD(+). The polypeptide is Dihydroorotate dehydrogenase B (NAD(+)), electron transfer subunit (Bacillus velezensis (strain DSM 23117 / BGSC 10A6 / LMG 26770 / FZB42) (Bacillus amyloliquefaciens subsp. plantarum)).